We begin with the raw amino-acid sequence, 70 residues long: U2-agatoxin-Ao1j (70 aa).

The first 20 residues, 1 to 20 (MRAIISLLLISAMVFSMIAA), serve as a signal peptide directing secretion. Residues 21–34 (VPEEEGLQLSEDER) constitute a propeptide that is removed on maturation. 3 disulfides stabilise this stretch: Cys37-Cys53, Cys44-Cys58, and Cys52-Cys68. Residue Leu69 is modified to Leucine amide.

This sequence belongs to the neurotoxin 01 (U2-agtx) family. As to expression, expressed by the venom gland.

It is found in the secreted. Insect active toxin causing rapid but reversible paralysis in crickets. No activity shown in mammals. Does not show effect on mammalian voltage-gated calcium channels. This is U2-agatoxin-Ao1j from Agelena orientalis (Funnel-web spider).